Consider the following 296-residue polypeptide: Bifunctional protein FolD (296 aa).

NADP(+) is bound by residues 166 to 168, Ser-191, and Ile-232; that span reads GRS.

Belongs to the tetrahydrofolate dehydrogenase/cyclohydrolase family. In terms of assembly, homodimer.

It catalyses the reaction (6R)-5,10-methylene-5,6,7,8-tetrahydrofolate + NADP(+) = (6R)-5,10-methenyltetrahydrofolate + NADPH. The catalysed reaction is (6R)-5,10-methenyltetrahydrofolate + H2O = (6R)-10-formyltetrahydrofolate + H(+). Its pathway is one-carbon metabolism; tetrahydrofolate interconversion. Functionally, catalyzes the oxidation of 5,10-methylenetetrahydrofolate to 5,10-methenyltetrahydrofolate and then the hydrolysis of 5,10-methenyltetrahydrofolate to 10-formyltetrahydrofolate. This Cereibacter sphaeroides (strain ATCC 17025 / ATH 2.4.3) (Rhodobacter sphaeroides) protein is Bifunctional protein FolD.